Consider the following 125-residue polypeptide: Mite group 2 allergen Gly d 2.02 (125 aa).

This sequence belongs to the NPC2 family.

The protein resides in the secreted. The protein is Mite group 2 allergen Gly d 2.02 of Glycyphagus domesticus (House itch mite).